The sequence spans 226 residues: Probable septum site-determining protein MinC (226 aa).

It belongs to the MinC family. In terms of assembly, interacts with MinD and FtsZ.

Functionally, cell division inhibitor that blocks the formation of polar Z ring septums. Rapidly oscillates between the poles of the cell to destabilize FtsZ filaments that have formed before they mature into polar Z rings. Prevents FtsZ polymerization. The polypeptide is Probable septum site-determining protein MinC (Edwardsiella ictaluri (strain 93-146)).